The chain runs to 256 residues: 5-oxoprolinase subunit A (256 aa).

This sequence belongs to the LamB/PxpA family. As to quaternary structure, forms a complex composed of PxpA, PxpB and PxpC.

It carries out the reaction 5-oxo-L-proline + ATP + 2 H2O = L-glutamate + ADP + phosphate + H(+). In terms of biological role, catalyzes the cleavage of 5-oxoproline to form L-glutamate coupled to the hydrolysis of ATP to ADP and inorganic phosphate. In Geobacillus thermodenitrificans (strain NG80-2), this protein is 5-oxoprolinase subunit A.